Reading from the N-terminus, the 359-residue chain is E2F transcription factor-like E2FD (359 aa).

DNA-binding regions lie at residues 13-78 (RKDK…SWKG) and 138-217 (RKER…RWLG). Disordered stretches follow at residues 255-274 (RNKS…QNTS) and 288-313 (DVKN…NNIR). Over residues 293–309 (ASGSSTPAGTSESNDMG) the composition is skewed to polar residues.

Belongs to the E2F/DP family. Monomer. No interactions with DPA or E2FA. Preferentially expressed in proliferating tissues. Highly expressed in young stalk and young flowers. Lower expression in young leaves and mature flowers. Detected in cotyledonary vascular tissues, the shoot apical meristem, the base of trichomes, the fully developed stomata, the central root cylinder and in the columella of lateral roots but not in the primary root tips or in the leaf epidermal cells.

The protein resides in the nucleus. Functionally, inhibitor of E2F-dependent regulation of gene expression. Binds specifically the E2 recognition site as a monomer without interacting with DP proteins. May be up-regulating E2FA and down-regulating repressors of cell cycle progression. Promotes cell proliferation and represses cell elongation. Regulated by proteolysis via a ubiquitin-proteasome pathway. The chain is E2F transcription factor-like E2FD (E2FD) from Arabidopsis thaliana (Mouse-ear cress).